The primary structure comprises 583 residues: Aspartate--tRNA ligase (583 aa).

Glutamate 174 serves as a coordination point for L-aspartate. Residues 198 to 201 (QITK) form an aspartate region. L-aspartate is bound at residue arginine 220. Residues 220–222 (RDE) and glutamine 229 contribute to the ATP site. Histidine 443 provides a ligand contact to L-aspartate. Glutamate 477 contacts ATP. Residue arginine 484 coordinates L-aspartate. Position 529–532 (529–532 (GLDR)) interacts with ATP.

Belongs to the class-II aminoacyl-tRNA synthetase family. Type 1 subfamily. In terms of assembly, homodimer.

Its subcellular location is the cytoplasm. The catalysed reaction is tRNA(Asp) + L-aspartate + ATP = L-aspartyl-tRNA(Asp) + AMP + diphosphate. In terms of biological role, catalyzes the attachment of L-aspartate to tRNA(Asp) in a two-step reaction: L-aspartate is first activated by ATP to form Asp-AMP and then transferred to the acceptor end of tRNA(Asp). The polypeptide is Aspartate--tRNA ligase (Streptococcus thermophilus (strain ATCC BAA-491 / LMD-9)).